Consider the following 226-residue polypeptide: Molybdenum transport system permease protein ModB (226 aa).

The ABC transmembrane type-1 domain occupies 11 to 217; it reads IRLTLELASL…SFLVLFALYS (207 aa). A run of 5 helical transmembrane segments spans residues 17-37, 47-67, 88-108, 150-170, and 197-217; these read LASLTTVLLLVVGTPIAWWLA, IGAVVALPLVLPPTVLGFYLL, LPFTFAGLVVASVFYSLPFVV, ITAAILGFAHTVGEFGVVLMI, and AHWLAGGMVLFSFLVLFALYS.

Belongs to the binding-protein-dependent transport system permease family. CysTW subfamily.

It localises to the cell inner membrane. Part of the binding-protein-dependent transport system for molybdenum; probably responsible for the translocation of the substrate across the membrane. This Azotobacter vinelandii protein is Molybdenum transport system permease protein ModB (modB).